The chain runs to 484 residues: ATP synthase subunit beta (484 aa).

156-163 (GGAGVGKT) contacts ATP.

The protein belongs to the ATPase alpha/beta chains family. F-type ATPases have 2 components, CF(1) - the catalytic core - and CF(0) - the membrane proton channel. CF(1) has five subunits: alpha(3), beta(3), gamma(1), delta(1), epsilon(1). CF(0) has three main subunits: a(1), b(2) and c(9-12). The alpha and beta chains form an alternating ring which encloses part of the gamma chain. CF(1) is attached to CF(0) by a central stalk formed by the gamma and epsilon chains, while a peripheral stalk is formed by the delta and b chains.

The protein localises to the cell inner membrane. The catalysed reaction is ATP + H2O + 4 H(+)(in) = ADP + phosphate + 5 H(+)(out). Functionally, produces ATP from ADP in the presence of a proton gradient across the membrane. The catalytic sites are hosted primarily by the beta subunits. This Rhizorhabdus wittichii (strain DSM 6014 / CCUG 31198 / JCM 15750 / NBRC 105917 / EY 4224 / RW1) (Sphingomonas wittichii) protein is ATP synthase subunit beta.